The primary structure comprises 88 residues: ATP synthase F(0) complex subunit f, mitochondrial (88 aa).

A2 carries the N-acetylalanine modification. Residue S3 is modified to Phosphoserine. An N6-acetyllysine modification is found at K16. Residues 62 to 79 (MVLAAYVVFSYCISYKEL) form a helical membrane-spanning segment.

Belongs to the ATPase F chain family. As to quaternary structure, component of the ATP synthase complex composed at least of ATP5F1A/subunit alpha, ATP5F1B/subunit beta, ATP5MC1/subunit c (homooctomer), MT-ATP6/subunit a, MT-ATP8/subunit 8, ATP5ME/subunit e, ATP5MF/subunit f, ATP5MG/subunit g, ATP5MK/subunit k, ATP5MJ/subunit j, ATP5F1C/subunit gamma, ATP5F1D/subunit delta, ATP5F1E/subunit epsilon, ATP5PF/subunit F6, ATP5PB/subunit b, ATP5PD/subunit d, ATP5PO/subunit OSCP. ATP synthase complex consists of a soluble F(1) head domain (subunits alpha(3) and beta(3)) - the catalytic core - and a membrane F(0) domain - the membrane proton channel (subunits c, a, 8, e, f, g, k and j). These two domains are linked by a central stalk (subunits gamma, delta, and epsilon) rotating inside the F1 region and a stationary peripheral stalk (subunits F6, b, d, and OSCP).

The protein resides in the mitochondrion. Its subcellular location is the mitochondrion inner membrane. In terms of biological role, subunit f, of the mitochondrial membrane ATP synthase complex (F(1)F(0) ATP synthase or Complex V) that produces ATP from ADP in the presence of a proton gradient across the membrane which is generated by electron transport complexes of the respiratory chain. ATP synthase complex consist of a soluble F(1) head domain - the catalytic core - and a membrane F(1) domain - the membrane proton channel. These two domains are linked by a central stalk rotating inside the F(1) region and a stationary peripheral stalk. During catalysis, ATP synthesis in the catalytic domain of F(1) is coupled via a rotary mechanism of the central stalk subunits to proton translocation. In vivo, can only synthesize ATP although its ATP hydrolase activity can be activated artificially in vitro. Part of the complex F(0) domain. In Rattus norvegicus (Rat), this protein is ATP synthase F(0) complex subunit f, mitochondrial.